Consider the following 55-residue polypeptide: Small integral membrane protein 11 (55 aa).

The helical transmembrane segment at 9-29 (VPLLLYILAAKTLILCLAFAG) threads the bilayer. Residues 34–54 (QRRSLEGKLQAEKRKQSEKKA) adopt a coiled-coil conformation.

In terms of tissue distribution, expressed in brain, heart, kidney, thymus, liver, stomach, muscle, lung, testis, ovary, skin and eye.

It localises to the membrane. This Mus musculus (Mouse) protein is Small integral membrane protein 11.